The following is a 490-amino-acid chain: Betaine aldehyde dehydrogenase (490 aa).

S26, I27, and D93 together coordinate K(+). G150–W152 is a binding site for NAD(+). The active-site Charge relay system is the K162. Residues K176–E179 and G230–T233 contribute to the NAD(+) site. A K(+)-binding site is contributed by L246. E252 (proton acceptor) is an active-site residue. NAD(+) is bound by residues G254, C286, and E387. The active-site Nucleophile is the C286. C286 is subject to Cysteine sulfenic acid (-SOH). Residues K457 and G460 each coordinate K(+). E464 functions as the Charge relay system in the catalytic mechanism.

The protein belongs to the aldehyde dehydrogenase family. As to quaternary structure, dimer of dimers. It depends on K(+) as a cofactor.

It carries out the reaction betaine aldehyde + NAD(+) + H2O = glycine betaine + NADH + 2 H(+). The protein operates within amine and polyamine biosynthesis; betaine biosynthesis via choline pathway; betaine from betaine aldehyde: step 1/1. Its function is as follows. Involved in the biosynthesis of the osmoprotectant glycine betaine. Catalyzes the irreversible oxidation of betaine aldehyde to the corresponding acid. This Acinetobacter baumannii (strain SDF) protein is Betaine aldehyde dehydrogenase.